The following is a 412-amino-acid chain: Peptidase T (412 aa).

Histidine 83 is a binding site for Zn(2+). The active site involves aspartate 85. Residue aspartate 145 participates in Zn(2+) binding. The active-site Proton acceptor is glutamate 179. Zn(2+)-binding residues include glutamate 180, aspartate 202, and histidine 384.

This sequence belongs to the peptidase M20B family. Requires Zn(2+) as cofactor.

The protein resides in the cytoplasm. The enzyme catalyses Release of the N-terminal residue from a tripeptide.. In terms of biological role, cleaves the N-terminal amino acid of tripeptides. The chain is Peptidase T from Fusobacterium nucleatum subsp. nucleatum (strain ATCC 25586 / DSM 15643 / BCRC 10681 / CIP 101130 / JCM 8532 / KCTC 2640 / LMG 13131 / VPI 4355).